Consider the following 139-residue polypeptide: Large-conductance mechanosensitive channel (139 aa).

A run of 3 helical transmembrane segments spans residues 14–34, 38–58, and 82–102; these read VVDL…VNSA, IFMP…YYIP, and GQFL…FLVI.

The protein belongs to the MscL family. Homopentamer.

It localises to the cell inner membrane. Functionally, channel that opens in response to stretch forces in the membrane lipid bilayer. May participate in the regulation of osmotic pressure changes within the cell. The protein is Large-conductance mechanosensitive channel of Methylobacterium radiotolerans (strain ATCC 27329 / DSM 1819 / JCM 2831 / NBRC 15690 / NCIMB 10815 / 0-1).